The sequence spans 168 residues: Ribosome maturation factor RimP (168 aa).

This sequence belongs to the RimP family.

The protein localises to the cytoplasm. Functionally, required for maturation of 30S ribosomal subunits. The sequence is that of Ribosome maturation factor RimP from Syntrophobacter fumaroxidans (strain DSM 10017 / MPOB).